The sequence spans 1319 residues: Protein Jumonji (1319 aa).

Over residues 1 to 11 (MSKERPKRNII) the composition is skewed to basic residues. 7 disordered regions span residues 1-23 (MSKE…GMPW), 50-130 (DGID…PSLP), 173-265 (DEED…NTNG), 351-382 (YSNN…QSIN), 396-478 (HKMT…KALN), 499-537 (PIQK…PKRA), and 549-599 (QQRA…RSRA). The segment covering 61 to 70 (ASLSNGQLNG) has biased composition (polar residues). Residues 74 to 88 (GHKEDGSRSQRKDGG) are compositionally biased toward basic and acidic residues. The short motif at 96-102 (PAKKRPR) is the Nuclear localization signal element. Over residues 98-107 (KKRPRLHAQR) the composition is skewed to basic residues. A compositionally biased stretch (polar residues) spans 109–121 (FAQSQPNSPSNTP). Residues 173-185 (DEEDLEDEDEIEE) show a composition bias toward acidic residues. A compositionally biased stretch (polar residues) spans 191-200 (VASTSCQSTP). Residues 221-251 (KDKELTPRSKARESSVGRDRSERCDESEISH) are compositionally biased toward basic and acidic residues. Residues 372 to 382 (LSHSGKAQSIN) show a composition bias toward polar residues. Basic and acidic residues predominate over residues 413–424 (SAREEEVVDRPV). Residues 505–515 (PAPPPSPPAAP) are compositionally biased toward pro residues. Low complexity-rich tracts occupy residues 516–525 (ASPSMPQNPA) and 554–570 (TNPT…ASKS). Positions 583–598 (RLDRDRERERERERSR) are enriched in basic and acidic residues. The region spanning 607 to 648 (VPIFKPSSREFQDPLVYLDSFREQVESCGLCRVLPPTDWRPE) is the JmjN domain. An ARID domain is found at 671–779 (WGPNVQKLAC…FLLSYDLLSP (109 aa)). A compositionally biased stretch (basic and acidic residues) spans 798–811 (RKRGPLEGHSDNGH). The interval 798-818 (RKRGPLEGHSDNGHHSLALPR) is disordered. A GSGFP motif motif is present at residues 944–948 (GSGFP). Residues 954–1118 (PFSKHGWNLT…LGYEAAKDLK (165 aa)) form the JmjC domain.

Belongs to the JARID2 family. In terms of assembly, associates with the PRC2 complex.

The protein resides in the nucleus. Regulator of histone methyltransferase complexes that plays an essential role in embryonic development. Acts by modulating histone methyltransferase activity and promoting the recruitment of histone methyltransferase complexes to their target genes. Binds DNA and mediates the recruitment of the PRC2 complex to target genes in embryonic stem cells. Does not have histone demethylase activity but regulates activity of various histone methyltransferase complexes. In embryonic stem cells, it associates with the PRC2 complex and inhibits trimethylation of 'Lys-27' of histone H3 (H3K27me3) by the PRC2 complex, thereby playing a key role in differentiation of embryonic stem cells and normal development. This is Protein Jumonji (jarid2b) from Danio rerio (Zebrafish).